We begin with the raw amino-acid sequence, 87 residues long: Histone H1.C6/H1.C9 (87 aa).

The tract at residues 1 to 87 (MSDAAVPPKK…KKAVKKAPKK (87 aa)) is disordered. A compositionally biased stretch (basic residues) spans 11 to 87 (ASPKKASPKK…KKAVKKAPKK (77 aa)).

The protein localises to the nucleus. It is found in the chromosome. The sequence is that of Histone H1.C6/H1.C9 from Trypanosoma cruzi.